We begin with the raw amino-acid sequence, 379 residues long: Citrate synthase (379 aa).

Residues His225, His265, and Asp316 contribute to the active site.

This sequence belongs to the citrate synthase family. As to quaternary structure, homodimer.

The catalysed reaction is oxaloacetate + acetyl-CoA + H2O = citrate + CoA + H(+). Its pathway is carbohydrate metabolism; tricarboxylic acid cycle; isocitrate from oxaloacetate: step 1/2. Its function is as follows. Might regulate the synthesis and function of enzymes involved in later enzymatic steps of Krebs cycle. This is Citrate synthase (citZ) from Haloferax volcanii (strain ATCC 29605 / DSM 3757 / JCM 8879 / NBRC 14742 / NCIMB 2012 / VKM B-1768 / DS2) (Halobacterium volcanii).